The chain runs to 288 residues: Quinate/shikimate dehydrogenase (288 aa).

Substrate contacts are provided by Lys-71 and Asp-107. NAD(+) is bound by residues 132–135, 155–158, Lys-205, 232–235, and Gly-255; these read AGGA, NRRD, and CVYN.

The protein belongs to the shikimate dehydrogenase family. As to quaternary structure, homodimer.

The catalysed reaction is L-quinate + NAD(+) = 3-dehydroquinate + NADH + H(+). It catalyses the reaction L-quinate + NADP(+) = 3-dehydroquinate + NADPH + H(+). It carries out the reaction shikimate + NADP(+) = 3-dehydroshikimate + NADPH + H(+). The enzyme catalyses shikimate + NAD(+) = 3-dehydroshikimate + NADH + H(+). Its pathway is metabolic intermediate biosynthesis; chorismate biosynthesis; chorismate from D-erythrose 4-phosphate and phosphoenolpyruvate: step 4/7. Functionally, the actual biological function of YdiB remains unclear, nor is it known whether 3-dehydroshikimate or quinate represents the natural substrate. Catalyzes the reversible NAD-dependent reduction of both 3-dehydroshikimate (DHSA) and 3-dehydroquinate to yield shikimate (SA) and quinate, respectively. It can use both NAD or NADP for catalysis, however it has higher catalytic efficiency with NAD. The polypeptide is Quinate/shikimate dehydrogenase (Escherichia coli (strain SMS-3-5 / SECEC)).